A 56-amino-acid polypeptide reads, in one-letter code: Small ribosomal subunit protein uS14 (56 aa).

S9 carries the phosphoserine modification. The residue at position 12 (R12) is an Omega-N-methylarginine. Zn(2+) contacts are provided by C21, C24, C39, and C42. K48 is modified (N6-acetyllysine).

It belongs to the universal ribosomal protein uS14 family. In terms of assembly, component of the 40S small ribosomal subunit. The cofactor is Zn(2+).

It localises to the cytoplasm. The protein localises to the cytosol. The protein resides in the rough endoplasmic reticulum. Functionally, component of the small ribosomal subunit. The ribosome is a large ribonucleoprotein complex responsible for the synthesis of proteins in the cell. The chain is Small ribosomal subunit protein uS14 (Rps29) from Mus musculus (Mouse).